The primary structure comprises 373 residues: Chaperone protein DnaJ (373 aa).

The 66-residue stretch at 5-70 folds into the J domain; that stretch reads CYYEVLEVSR…EKRSRYDRFG (66 aa). The segment at 134-212 adopts a CR-type zinc-finger fold; it reads GTEVELNIPV…CRGAGYVRKQ (79 aa). Positions 147, 150, 164, 167, 186, 189, 200, and 203 each coordinate Zn(2+). CXXCXGXG motif repeat units lie at residues 147-154, 164-171, 186-193, and 200-207; these read CDTCEGSG, CSHCGGRG, CPACNGRG, and CSECRGAG.

Belongs to the DnaJ family. As to quaternary structure, homodimer. Requires Zn(2+) as cofactor.

The protein resides in the cytoplasm. In terms of biological role, participates actively in the response to hyperosmotic and heat shock by preventing the aggregation of stress-denatured proteins and by disaggregating proteins, also in an autonomous, DnaK-independent fashion. Unfolded proteins bind initially to DnaJ; upon interaction with the DnaJ-bound protein, DnaK hydrolyzes its bound ATP, resulting in the formation of a stable complex. GrpE releases ADP from DnaK; ATP binding to DnaK triggers the release of the substrate protein, thus completing the reaction cycle. Several rounds of ATP-dependent interactions between DnaJ, DnaK and GrpE are required for fully efficient folding. Also involved, together with DnaK and GrpE, in the DNA replication of plasmids through activation of initiation proteins. In Maridesulfovibrio salexigens (strain ATCC 14822 / DSM 2638 / NCIMB 8403 / VKM B-1763) (Desulfovibrio salexigens), this protein is Chaperone protein DnaJ.